A 91-amino-acid chain; its full sequence is DNA-binding protein HU (91 aa).

Belongs to the bacterial histone-like protein family.

In terms of biological role, histone-like DNA-binding protein which is capable of wrapping DNA to stabilize it, and thus to prevent its denaturation under extreme environmental conditions. Also seems to act as a fortuitous virulence factor in delayed sequelae by binding to heparan sulfate-proteoglycans in the extracellular matrix of target organs and acting as a nidus for in situ immune complex formation. This chain is DNA-binding protein HU (hup), found in Streptococcus gordonii.